A 310-amino-acid chain; its full sequence is HPr kinase/phosphorylase (310 aa).

Residues H138 and K159 contribute to the active site. Residue 153-160 coordinates ATP; sequence GKSGVGKS. Residue S160 participates in Mg(2+) binding. D177 acts as the Proton acceptor; for phosphorylation activity. Proton donor; for dephosphorylation activity in catalysis. Residues 201–210 are important for the catalytic mechanism of both phosphorylation and dephosphorylation; that stretch reads LEIRGLGIIN. E202 serves as a coordination point for Mg(2+). Residue R243 is part of the active site. The tract at residues 264–269 is important for the catalytic mechanism of dephosphorylation; the sequence is PVRPGR.

Belongs to the HPrK/P family. As to quaternary structure, homohexamer. It depends on Mg(2+) as a cofactor.

It catalyses the reaction [HPr protein]-L-serine + ATP = [HPr protein]-O-phospho-L-serine + ADP + H(+). It carries out the reaction [HPr protein]-O-phospho-L-serine + phosphate + H(+) = [HPr protein]-L-serine + diphosphate. In terms of biological role, catalyzes the ATP- as well as the pyrophosphate-dependent phosphorylation of a specific serine residue in HPr, a phosphocarrier protein of the phosphoenolpyruvate-dependent sugar phosphotransferase system (PTS). HprK/P also catalyzes the pyrophosphate-producing, inorganic phosphate-dependent dephosphorylation (phosphorolysis) of seryl-phosphorylated HPr (P-Ser-HPr). The two antagonistic activities of HprK/P are regulated by several intracellular metabolites, which change their concentration in response to the absence or presence of rapidly metabolisable carbon sources (glucose, fructose, etc.) in the growth medium. Also phosphorylates/dephosphorylates the HPr-like catabolite repression protein crh on a specific serine residue. Therefore, by controlling the phosphorylation state of HPr and crh, HPrK/P is a sensor enzyme that plays a major role in the regulation of carbon metabolism and sugar transport: it mediates carbon catabolite repression (CCR), and regulates PTS-catalyzed carbohydrate uptake and inducer exclusion. This is HPr kinase/phosphorylase from Bacillus pumilus (strain SAFR-032).